Consider the following 459-residue polypeptide: Ribulose bisphosphate carboxylase (459 aa).

Residue asparagine 111 coordinates substrate. Lysine 166 (proton acceptor) is an active-site residue. Lysine 168 provides a ligand contact to substrate. Positions 191, 193, and 194 each coordinate Mg(2+). Lysine 191 is subject to N6-carboxylysine. The active-site Proton acceptor is histidine 287. 3 residues coordinate substrate: arginine 288, histidine 321, and serine 368.

It belongs to the RuBisCO large chain family. Type II subfamily. Homodimer. It depends on Mg(2+) as a cofactor.

It catalyses the reaction 2 (2R)-3-phosphoglycerate + 2 H(+) = D-ribulose 1,5-bisphosphate + CO2 + H2O. The enzyme catalyses D-ribulose 1,5-bisphosphate + O2 = 2-phosphoglycolate + (2R)-3-phosphoglycerate + 2 H(+). Its function is as follows. RuBisCO catalyzes two reactions: the carboxylation of D-ribulose 1,5-bisphosphate, the primary event in carbon dioxide fixation, as well as the oxidative fragmentation of the pentose substrate. Both reactions occur simultaneously and in competition at the same active site. The chain is Ribulose bisphosphate carboxylase from Cereibacter sphaeroides (strain ATCC 17029 / ATH 2.4.9) (Rhodobacter sphaeroides).